The chain runs to 475 residues: Protein translocase subunit SecD (475 aa).

The next 6 helical transmembrane spans lie at 7 to 27 (LLIT…SLKF), 313 to 333 (KGFM…FIYY), 338 to 358 (LIAD…MAYL), 364 to 384 (LPGV…NVLI), 410 to 430 (FWTI…LFQF), and 437 to 457 (GFAV…VTVT).

Belongs to the SecD/SecF family. SecD subfamily. In terms of assembly, forms a complex with SecF. Part of the essential Sec protein translocation apparatus which comprises SecA, SecYEG and auxiliary proteins SecDF. Other proteins may also be involved.

The protein localises to the cell inner membrane. Its function is as follows. Part of the Sec protein translocase complex. Interacts with the SecYEG preprotein conducting channel. SecDF uses the proton motive force (PMF) to complete protein translocation after the ATP-dependent function of SecA. This chain is Protein translocase subunit SecD, found in Endomicrobium trichonymphae.